The chain runs to 242 residues: Type III pantothenate kinase (242 aa).

An ATP-binding site is contributed by 7–14 (DLGNSRFK). Substrate-binding positions include tyrosine 91 and 98-101 (GVDR). Aspartate 100 functions as the Proton acceptor in the catalytic mechanism. ATP is bound at residue threonine 121. Threonine 171 is a binding site for substrate.

The protein belongs to the type III pantothenate kinase family. As to quaternary structure, homodimer. The cofactor is NH4(+). K(+) serves as cofactor.

Its subcellular location is the cytoplasm. The enzyme catalyses (R)-pantothenate + ATP = (R)-4'-phosphopantothenate + ADP + H(+). The protein operates within cofactor biosynthesis; coenzyme A biosynthesis; CoA from (R)-pantothenate: step 1/5. Functionally, catalyzes the phosphorylation of pantothenate (Pan), the first step in CoA biosynthesis. The protein is Type III pantothenate kinase of Xanthomonas campestris pv. campestris (strain B100).